The sequence spans 635 residues: Probable ethylene response sensor 2 (635 aa).

Transmembrane regions (helical) follow at residues 24-44, 59-79, and 94-114; these read ISDF…IYFV, FGAF…TFAI, and ATAV…PDLL. 2 residues coordinate Cu cation: C66 and H70. The 150-residue stretch at 159-308 folds into the GAF domain; that stretch reads DRHTILRTTL…VVADQVAVAL (150 aa). In terms of domain architecture, Histidine kinase spans 351 to 589; that stretch reads VMNHEMRTPM…MFFVKLGMPE (239 aa). H354 bears the Phosphohistidine; by autocatalysis mark.

Belongs to the ethylene receptor family. In terms of assembly, homodimer. It depends on Cu cation as a cofactor. In terms of tissue distribution, expressed in anthers and hulls.

It localises to the endoplasmic reticulum membrane. It carries out the reaction ATP + protein L-histidine = ADP + protein N-phospho-L-histidine.. In terms of biological role, ethylene receptor related to bacterial two-component regulators. Acts as a negative regulator of ethylene signaling. May play a role in the regulation of flowering by up-regulating GI (GIGANTEA) and RCN1 and regulate starch accumulation by down-regulating the alpha-amylase AMY3D. In Oryza sativa subsp. indica (Rice), this protein is Probable ethylene response sensor 2.